Reading from the N-terminus, the 424-residue chain is Ubiquitin carboxyl-terminal hydrolase 12/46 homolog (424 aa).

One can recognise a USP domain in the interval 24–421; the sequence is FGLVNFGNTC…TGYILFYQSR (398 aa). C33 functions as the Nucleophile in the catalytic mechanism. The segment at 131 to 189 is disordered; that stretch reads NAGPSNGNPKATNQGGSTSAMASSIASKSSSTSNSNSNSNSTTNSNGNSSNSTGSLNAN. Residues 133 to 144 are compositionally biased toward polar residues; the sequence is GPSNGNPKATNQ. The span at 145 to 189 shows a compositional bias: low complexity; sequence GGSTSAMASSIASKSSSTSNSNSNSNSTTNSNGNSSNSTGSLNAN. Catalysis depends on H369, which acts as the Proton acceptor.

The protein belongs to the peptidase C19 family. In terms of assembly, catalytic component of the Usp12-46 deubiquitylase complex consisting of Usp12-46, Wdr20 and Uaf1. The Usp12-46 deubiquitylase complex associates with arr/arrow; the interaction leads to deubiquitination and stabilization of arr/arrow.

It catalyses the reaction Thiol-dependent hydrolysis of ester, thioester, amide, peptide and isopeptide bonds formed by the C-terminal Gly of ubiquitin (a 76-residue protein attached to proteins as an intracellular targeting signal).. In terms of biological role, catalytic component of the Usp12-46 deubiquitylase complex. Deubiquitylates the wg/wingless-signaling receptor arr/arrow, which stabilizes the receptor and increases its concentration at the cell surface; this enhances the sensitivity of cells to wg/wingless-signal stimulation. This increases the amplitude and spatial range of the signaling response to the wg/wingless morphogen gradient, facilitating the precise, concentration-dependent regulation of its target genes. Required for wg/wingless-mediated signaling in the wing imaginal disc and for wg/wingless-dependent regulation of adult intestinal stem cell proliferation. Negative regulator of Notch signaling, possibly by regulating lysosomal degradation of N/Notch and affecting cell surface receptor levels; this may be context and cell-type specific function involved in external sensory organ development but not in wing imaginal-disc dorsoventral boundary signaling. Protects against HTT/huntingtin-induced polyglutamine expansion-dependent neurodegeneration. In Drosophila melanogaster (Fruit fly), this protein is Ubiquitin carboxyl-terminal hydrolase 12/46 homolog.